Here is a 130-residue protein sequence, read N- to C-terminus: Small ribosomal subunit protein uS8 (130 aa).

The protein belongs to the universal ribosomal protein uS8 family. As to quaternary structure, part of the 30S ribosomal subunit. Contacts proteins S5 and S12.

Its function is as follows. One of the primary rRNA binding proteins, it binds directly to 16S rRNA central domain where it helps coordinate assembly of the platform of the 30S subunit. The chain is Small ribosomal subunit protein uS8 from Sodalis glossinidius (strain morsitans).